A 325-amino-acid chain; its full sequence is Protein SAR DEFICIENT 4 (325 aa).

Residues 1–42 constitute a chloroplast transit peptide; the sequence is MAALPVFIPAESFPSILSHETLINHFRTNLPKHSSTITSPVR.

Belongs to the ornithine cyclodeaminase/mu-crystallin family.

The protein resides in the plastid. Its subcellular location is the chloroplast. Functionally, involved in the biosynthesis of pipecolate (Pip), a metabolite that orchestrates defense amplification, positive regulation of salicylic acid (SA) biosynthesis, and priming to guarantee effective local resistance induction and the establishment of systemic acquired resistance (SAR). Converts delta-(1)-piperideine-2-carboxylate (P2C) to Pip. Mediates reduction of P2C and biosynthesis of Pip in systemic tissue and contributes to SAR establishment. Does not possess ornithine cyclodeaminase activity in vitro. This chain is Protein SAR DEFICIENT 4, found in Arabidopsis thaliana (Mouse-ear cress).